A 688-amino-acid polypeptide reads, in one-letter code: Homoaconitase, mitochondrial (688 aa).

[4Fe-4S] cluster contacts are provided by Cys-335, Cys-395, and Cys-398. The tract at residues 468–494 (SIDLPKSSGNTGATSEEPISEDDTSEA) is disordered.

This sequence belongs to the aconitase/IPM isomerase family. [4Fe-4S] cluster serves as cofactor.

It is found in the mitochondrion. The catalysed reaction is (2R,3S)-homoisocitrate = cis-homoaconitate + H2O. The protein operates within amino-acid biosynthesis; L-lysine biosynthesis via AAA pathway; L-alpha-aminoadipate from 2-oxoglutarate: step 3/5. In terms of biological role, catalyzes the reversible hydration of cis-homoaconitate to (2R,3S)-homoisocitrate, a step in the alpha-aminoadipate pathway for lysine biosynthesis. This chain is Homoaconitase, mitochondrial (LYS4), found in Candida parapsilosis (Yeast).